The sequence spans 398 residues: Riboflavin biosynthesis protein RibBA (398 aa).

Residues 1 to 199 are DHBP synthase; that stretch reads MFHPIEEALD…IKDLIQYRYN (199 aa). Residues 26–27, aspartate 31, 138–142, and glutamate 162 each bind D-ribulose 5-phosphate; these read RE and RAGHT. Glutamate 27 is a Mg(2+) binding site. Histidine 141 lines the Mg(2+) pocket. Residues 200 to 398 are GTP cyclohydrolase II; it reads LTTLVEREVD…MNKLGHLLHF (199 aa). Residue 251 to 255 participates in GTP binding; sequence RVHSE. Residues cysteine 256, cysteine 267, and cysteine 269 each contribute to the Zn(2+) site. GTP-binding positions include glutamine 272, 294–296, and threonine 316; that span reads EGR. Aspartate 328 serves as the catalytic Proton acceptor; for GTP cyclohydrolase activity. Arginine 330 serves as the catalytic Nucleophile; for GTP cyclohydrolase activity. 2 residues coordinate GTP: threonine 351 and lysine 356.

In the N-terminal section; belongs to the DHBP synthase family. This sequence in the C-terminal section; belongs to the GTP cyclohydrolase II family. Mg(2+) is required as a cofactor. Mn(2+) serves as cofactor. It depends on Zn(2+) as a cofactor.

It catalyses the reaction D-ribulose 5-phosphate = (2S)-2-hydroxy-3-oxobutyl phosphate + formate + H(+). The catalysed reaction is GTP + 4 H2O = 2,5-diamino-6-hydroxy-4-(5-phosphoribosylamino)-pyrimidine + formate + 2 phosphate + 3 H(+). The protein operates within cofactor biosynthesis; riboflavin biosynthesis; 2-hydroxy-3-oxobutyl phosphate from D-ribulose 5-phosphate: step 1/1. Its pathway is cofactor biosynthesis; riboflavin biosynthesis; 5-amino-6-(D-ribitylamino)uracil from GTP: step 1/4. In terms of biological role, catalyzes the conversion of D-ribulose 5-phosphate to formate and 3,4-dihydroxy-2-butanone 4-phosphate. Functionally, catalyzes the conversion of GTP to 2,5-diamino-6-ribosylamino-4(3H)-pyrimidinone 5'-phosphate (DARP), formate and pyrophosphate. This Bacillus subtilis (strain 168) protein is Riboflavin biosynthesis protein RibBA.